The sequence spans 135 residues: RxLR effector protein Avh5 (135 aa).

A signal peptide spans 1–19; the sequence is MRLQFFLVMAVATLATISA. The RxLR-dEER motif lies at 43–71; the sequence is RFLRTADTDIVYEPKVHNPGKKQVFIEDK. 3 residues coordinate a 1,2-diacyl-sn-glycero-3-phospho-(1D-myo-inositol-3-phosphate): lysine 81, lysine 83, and lysine 84.

It belongs to the RxLR effector family.

Its subcellular location is the secreted. It localises to the host cell. Its function is as follows. Effector that suppresses plant defense responses during the early stages of pathogen infection. Suppresses cell death induced by effectors and PAMPs in plant hosts. The protein is RxLR effector protein Avh5 of Phytophthora sojae (Soybean stem and root rot agent).